A 72-amino-acid chain; its full sequence is UPF0352 protein HI_0840 (72 aa).

It belongs to the UPF0352 family.

This is UPF0352 protein HI_0840 from Haemophilus influenzae (strain ATCC 51907 / DSM 11121 / KW20 / Rd).